Here is a 718-residue protein sequence, read N- to C-terminus: Sodium/myo-inositol cotransporter (718 aa).

Residues 1–9 (MRAVLDTAD) lie on the Extracellular side of the membrane. A helical membrane pass occupies residues 10 to 29 (IAIVALYFILVMCIGFFAMW). Residues 30 to 38 (KSNRSTVSG) lie on the Cytoplasmic side of the membrane. A helical transmembrane segment spans residues 39–57 (YFLAGRSMTWVAIGASLFV). Residues 58 to 86 (SNIGSEHFIGLAGSGAASGFAVGAWEFNA) are Extracellular-facing. Residues 87–110 (LLLLQLLGWVFIPIYIRSGVYTMP) form a helical membrane-spanning segment. Residues 111 to 123 (EYLSKRFGGHRIQ) are Cytoplasmic-facing. The helical transmembrane segment at 124 to 144 (VYFAALSLILYIFTKLSVDLY) threads the bilayer. Topologically, residues 145 to 157 (SGALFIQESLGWN) are extracellular. Residues 158–183 (LYVSVILLIGMTALLTVTGGLVAVIY) traverse the membrane as a helical segment. The Cytoplasmic portion of the chain corresponds to 184 to 186 (TDT). The helical transmembrane segment at 187–205 (LQALLMIIGALTLMIISIM) threads the bilayer. Residues 206 to 303 (EIGGFEEVKR…HAKGSTLMAG (98 aa)) are Extracellular-facing. A glycan (N-linked (GlcNAc...) asparagine) is linked at asparagine 232. A helical transmembrane segment spans residues 304-324 (FLKLLPMFIIVVPGMISRILF). The Cytoplasmic segment spans residues 325 to 353 (TDDIACINPEHCMLVCGSRAGCSNIAYPR). Residues 354–376 (LVMKLVPVGLRGLMMAVMIAALM) traverse the membrane as a helical segment. Over 377 to 406 (SDLDSIFNSASTIFTLDVYKLIRKSASSRE) the chain is Extracellular. A helical membrane pass occupies residues 407–430 (LMIVGRIFVAFMVVISIAWVPIIV). Over 431–443 (EMQGGQMYLYIQE) the chain is Cytoplasmic. The chain crosses the membrane as a helical span at residues 444 to 462 (VADYLTPPVAALFLLAIFW). Over 463–510 (KRCNEQGAFYGGMAGFVLGAVRLILAFAYRAPECDQPDNRPGFIKDIH) the chain is Extracellular. A helical membrane pass occupies residues 511–532 (YMYVATGLFWVTGLITVIVSLL). The Cytoplasmic segment spans residues 533-695 (TPPPTKEQIR…QMLEETRQVK (163 aa)). Residues serine 594 and serine 632 each carry the phosphoserine modification. The chain crosses the membrane as a helical span at residues 696 to 716 (VILNIGLFAVCSLGIFMFVYF). The Extracellular segment spans residues 717-718 (SL).

Belongs to the sodium:solute symporter (SSF) (TC 2.A.21) family. Interacts with KCNQ2 (via the pore module). Interacts with KCNQ1; this interaction is direct. Forms coregulatory complexes with ion channels KCNQ2-KCNQ3 and KCNQ1-KCNE2.

It is found in the apical cell membrane. Its subcellular location is the basolateral cell membrane. It catalyses the reaction myo-inositol(out) + 2 Na(+)(out) = myo-inositol(in) + 2 Na(+)(in). It carries out the reaction scyllo-inositol(out) + 2 Na(+)(out) = scyllo-inositol(in) + 2 Na(+)(in). Functionally, electrogenic Na(+)-coupled sugar symporter that actively transports myo-inositol and its stereoisomer scyllo-inositol across the plasma membrane, with a Na(+) to sugar coupling ratio of 2:1. Maintains myo-inositol concentration gradient that defines cell volume and fluid balance during osmotic stress, in particular in the fetoplacental unit and central nervous system. Forms coregulatory complexes with voltage-gated K(+) ion channels, allosterically altering ion selectivity, voltage dependence and gating kinetics of the channel. In turn, K(+) efflux through the channel forms a local electrical gradient that modulates electrogenic Na(+)-coupled myo-inositol influx through the transporter. Associates with KCNQ1-KCNE2 channel in the apical membrane of choroid plexus epithelium and regulates the myo-inositol gradient between blood and cerebrospinal fluid with an impact on neuron excitability. Associates with KCNQ2-KCNQ3 channel altering ion selectivity, increasing Na(+) and Cs(+) permeation relative to K(+) permeation. Provides myo-inositol precursor for biosynthesis of phosphoinositides such as PI(4,5)P2, thus indirectly affecting the activity of phosphoinositide-dependent ion channels and Ca(2+) signaling upon osmotic stress. This Homo sapiens (Human) protein is Sodium/myo-inositol cotransporter.